A 1345-amino-acid chain; its full sequence is Aldehyde oxidase 2 (1345 aa).

One can recognise a 2Fe-2S ferredoxin-type domain in the interval 9–96; that stretch reads DDLEFFVNGR…GAAVTTVEGV (88 aa). Cys48, Cys53, Cys56, and Cys78 together coordinate [2Fe-2S] cluster. Gln117 is a binding site for Mo-molybdopterin. [2Fe-2S] cluster-binding residues include Cys118, Cys121, Cys153, and Cys155. Residue Cys155 coordinates Mo-molybdopterin. One can recognise an FAD-binding PCMH-type domain in the interval 238–423; it reads FYGERITWIA…GSVYIPHSQK (186 aa). FAD contacts are provided by residues 266–273, Ala347, Ser356, His360, Asp369, and Leu413; that span reads LISGNTAL. Mo-molybdopterin is bound by residues 812–813, 1094–1097, Gln1209, and Leu1274; these read GF and ASVG. Glu1276 functions as the Proton acceptor; for azaheterocycle hydroxylase activity in the catalytic mechanism.

Belongs to the xanthine dehydrogenase family. Homodimer. [2Fe-2S] cluster serves as cofactor. The cofactor is FAD. Mo-molybdopterin is required as a cofactor. In terms of tissue distribution, expressed in olfactory mucosa epithelium (at protein level). Detected in skin.

The protein resides in the cytoplasm. It catalyses the reaction an aldehyde + O2 + H2O = a carboxylate + H2O2 + H(+). Oxidase with broad substrate specificity, oxidizing aromatic azaheterocycles, such as phthalazine, as well as aldehydes, such as benzaldehyde and retinal. Cannot use hypoxanthine as substrate. The protein is Aldehyde oxidase 2 (Aox2) of Mus musculus (Mouse).